The following is a 219-amino-acid chain: Transcriptional activator protein rep2 (219 aa).

The segment at 177–197 (CSKCNTTFNHSTALMMHEATC) is a zinc-finger region.

Functionally, transcriptional activator which interacts with the mcb binding subunit complex formed by res2 and cdc10. Rep2 is required for the mitotic cell cycle start. This is Transcriptional activator protein rep2 (rep2) from Schizosaccharomyces pombe (strain 972 / ATCC 24843) (Fission yeast).